The chain runs to 243 residues: tRNA (guanine-N(1)-)-methyltransferase (243 aa).

S-adenosyl-L-methionine-binding positions include G113 and 133–138 (IGDFVL).

Belongs to the RNA methyltransferase TrmD family. Homodimer.

The protein localises to the cytoplasm. It catalyses the reaction guanosine(37) in tRNA + S-adenosyl-L-methionine = N(1)-methylguanosine(37) in tRNA + S-adenosyl-L-homocysteine + H(+). In terms of biological role, specifically methylates guanosine-37 in various tRNAs. This Bacillus velezensis (strain DSM 23117 / BGSC 10A6 / LMG 26770 / FZB42) (Bacillus amyloliquefaciens subsp. plantarum) protein is tRNA (guanine-N(1)-)-methyltransferase.